The primary structure comprises 456 residues: Bifunctional protein GlmU (456 aa).

A pyrophosphorylase region spans residues 1–229 (MLNNAMSVVI…LSEVEGVNNR (229 aa)). Residues 11–14 (LAAG), Lys25, Gln76, 81–82 (GT), 103–105 (YGD), Gly140, Glu154, Asn169, and Asn227 contribute to the UDP-N-acetyl-alpha-D-glucosamine site. Position 105 (Asp105) interacts with Mg(2+). Residue Asn227 coordinates Mg(2+). Residues 230–250 (LQLSRLERVYQSEQAEKLLLA) are linker. The segment at 251 to 456 (GVMLRDPARF…EGWRRPVKKK (206 aa)) is N-acetyltransferase. UDP-N-acetyl-alpha-D-glucosamine contacts are provided by Arg333 and Lys351. Residue His363 is the Proton acceptor of the active site. The UDP-N-acetyl-alpha-D-glucosamine site is built by Tyr366 and Asn377. Residues Ala380, 386 to 387 (NY), Ser405, Ala423, and Arg440 contribute to the acetyl-CoA site.

It in the N-terminal section; belongs to the N-acetylglucosamine-1-phosphate uridyltransferase family. In the C-terminal section; belongs to the transferase hexapeptide repeat family. As to quaternary structure, homotrimer. Requires Mg(2+) as cofactor.

It is found in the cytoplasm. The catalysed reaction is alpha-D-glucosamine 1-phosphate + acetyl-CoA = N-acetyl-alpha-D-glucosamine 1-phosphate + CoA + H(+). It carries out the reaction N-acetyl-alpha-D-glucosamine 1-phosphate + UTP + H(+) = UDP-N-acetyl-alpha-D-glucosamine + diphosphate. It participates in nucleotide-sugar biosynthesis; UDP-N-acetyl-alpha-D-glucosamine biosynthesis; N-acetyl-alpha-D-glucosamine 1-phosphate from alpha-D-glucosamine 6-phosphate (route II): step 2/2. The protein operates within nucleotide-sugar biosynthesis; UDP-N-acetyl-alpha-D-glucosamine biosynthesis; UDP-N-acetyl-alpha-D-glucosamine from N-acetyl-alpha-D-glucosamine 1-phosphate: step 1/1. Its pathway is bacterial outer membrane biogenesis; LPS lipid A biosynthesis. Catalyzes the last two sequential reactions in the de novo biosynthetic pathway for UDP-N-acetylglucosamine (UDP-GlcNAc). The C-terminal domain catalyzes the transfer of acetyl group from acetyl coenzyme A to glucosamine-1-phosphate (GlcN-1-P) to produce N-acetylglucosamine-1-phosphate (GlcNAc-1-P), which is converted into UDP-GlcNAc by the transfer of uridine 5-monophosphate (from uridine 5-triphosphate), a reaction catalyzed by the N-terminal domain. This Shigella sonnei (strain Ss046) protein is Bifunctional protein GlmU.